Here is a 463-residue protein sequence, read N- to C-terminus: Polyadenylate-binding protein-interacting protein 1 (463 aa).

The tract at residues 1-86 (MSDGFERAPG…HKRTSPAAQL (86 aa)) is disordered. The MIF4G domain occupies 145–362 (TEYVQDFLNH…LKLVELRSSN (218 aa)). The segment at 420 to 442 (RDYDENGTDGGDSYFEDDDDNEM) is disordered. Over residues 433–442 (YFEDDDDNEM) the composition is skewed to acidic residues.

Interacts with the RRM1-RRM2 and C-terminal regions of epabp.

It localises to the cytoplasm. Acts as a coactivator in the regulation of translation initiation of poly(A)-containing mRNAs. This chain is Polyadenylate-binding protein-interacting protein 1, found in Xenopus laevis (African clawed frog).